Here is a 238-residue protein sequence, read N- to C-terminus: uncharacterized protein (238 aa).

A signal peptide spans 1–28 (MSRNSRGSGRYVFVVLACVFGYTRAVHA).

This is an uncharacterized protein from Treponema pallidum (strain Nichols).